Consider the following 840-residue polypeptide: DNA mismatch repair protein MutS (840 aa).

601–608 contributes to the ATP binding site; sequence GPNMSGKS.

This sequence belongs to the DNA mismatch repair MutS family.

In terms of biological role, this protein is involved in the repair of mismatches in DNA. It is possible that it carries out the mismatch recognition step. This protein has a weak ATPase activity. This chain is DNA mismatch repair protein MutS, found in Lactococcus lactis subsp. cremoris (strain MG1363).